Reading from the N-terminus, the 363-residue chain is Aminomethyltransferase (363 aa).

Belongs to the GcvT family. The glycine cleavage system is composed of four proteins: P, T, L and H.

It carries out the reaction N(6)-[(R)-S(8)-aminomethyldihydrolipoyl]-L-lysyl-[protein] + (6S)-5,6,7,8-tetrahydrofolate = N(6)-[(R)-dihydrolipoyl]-L-lysyl-[protein] + (6R)-5,10-methylene-5,6,7,8-tetrahydrofolate + NH4(+). The glycine cleavage system catalyzes the degradation of glycine. In Staphylococcus aureus (strain bovine RF122 / ET3-1), this protein is Aminomethyltransferase.